We begin with the raw amino-acid sequence, 368 residues long: ATP-dependent (S)-NAD(P)H-hydrate dehydratase (368 aa).

The region spanning 13-357 (LFKKVRKIVP…DEVHESFLEL (345 aa)) is the YjeF C-terminal domain. (6S)-NADPHX is bound by residues Gly125 and 178–184 (NVNEFSR). ATP-binding positions include 231–235 (KGPHD) and 250–259 (GGLKRSGGQG). Asp260 provides a ligand contact to (6S)-NADPHX.

Belongs to the NnrD/CARKD family. It depends on Mg(2+) as a cofactor.

It localises to the cytoplasm. It carries out the reaction (6S)-NADHX + ATP = ADP + phosphate + NADH + H(+). The catalysed reaction is (6S)-NADPHX + ATP = ADP + phosphate + NADPH + H(+). Functionally, catalyzes the dehydration of the S-form of NAD(P)HX at the expense of ATP, which is converted to ADP. Together with NAD(P)HX epimerase, which catalyzes the epimerization of the S- and R-forms, the enzyme allows the repair of both epimers of NAD(P)HX, a damaged form of NAD(P)H that is a result of enzymatic or heat-dependent hydration. The sequence is that of ATP-dependent (S)-NAD(P)H-hydrate dehydratase from Aspergillus fumigatus (strain ATCC MYA-4609 / CBS 101355 / FGSC A1100 / Af293) (Neosartorya fumigata).